Reading from the N-terminus, the 273-residue chain is Large ribosomal subunit protein uL2 (273 aa).

The tract at residues 221 to 263 (RGTAMNPVDHPHGGGEGRNFGKHPVSPWGLQTKGKKTRKNKRT) is disordered. A compositionally biased stretch (basic residues) spans 253-263 (KGKKTRKNKRT).

Belongs to the universal ribosomal protein uL2 family. Part of the 50S ribosomal subunit. Forms a bridge to the 30S subunit in the 70S ribosome.

One of the primary rRNA binding proteins. Required for association of the 30S and 50S subunits to form the 70S ribosome, for tRNA binding and peptide bond formation. It has been suggested to have peptidyltransferase activity; this is somewhat controversial. Makes several contacts with the 16S rRNA in the 70S ribosome. The polypeptide is Large ribosomal subunit protein uL2 (Buchnera aphidicola subsp. Baizongia pistaciae (strain Bp)).